A 481-amino-acid polypeptide reads, in one-letter code: Aspartyl/glutamyl-tRNA(Asn/Gln) amidotransferase subunit B (481 aa).

This sequence belongs to the GatB/GatE family. GatB subfamily. In terms of assembly, heterotrimer of A, B and C subunits.

The catalysed reaction is L-glutamyl-tRNA(Gln) + L-glutamine + ATP + H2O = L-glutaminyl-tRNA(Gln) + L-glutamate + ADP + phosphate + H(+). It catalyses the reaction L-aspartyl-tRNA(Asn) + L-glutamine + ATP + H2O = L-asparaginyl-tRNA(Asn) + L-glutamate + ADP + phosphate + 2 H(+). Functionally, allows the formation of correctly charged Asn-tRNA(Asn) or Gln-tRNA(Gln) through the transamidation of misacylated Asp-tRNA(Asn) or Glu-tRNA(Gln) in organisms which lack either or both of asparaginyl-tRNA or glutaminyl-tRNA synthetases. The reaction takes place in the presence of glutamine and ATP through an activated phospho-Asp-tRNA(Asn) or phospho-Glu-tRNA(Gln). This is Aspartyl/glutamyl-tRNA(Asn/Gln) amidotransferase subunit B from Pseudomonas fluorescens (strain Pf0-1).